We begin with the raw amino-acid sequence, 264 residues long: Thymidylate synthase (264 aa).

DUMP is bound at residue arginine 21. Histidine 51 lines the (6R)-5,10-methylene-5,6,7,8-tetrahydrofolate pocket. 126–127 (RR) contributes to the dUMP binding site. Cysteine 146 functions as the Nucleophile in the catalytic mechanism. DUMP contacts are provided by residues 166 to 169 (RSAD), asparagine 177, and 207 to 209 (HIY). A (6R)-5,10-methylene-5,6,7,8-tetrahydrofolate-binding site is contributed by aspartate 169. Residue alanine 263 participates in (6R)-5,10-methylene-5,6,7,8-tetrahydrofolate binding.

The protein belongs to the thymidylate synthase family. Bacterial-type ThyA subfamily. In terms of assembly, homodimer.

Its subcellular location is the cytoplasm. It carries out the reaction dUMP + (6R)-5,10-methylene-5,6,7,8-tetrahydrofolate = 7,8-dihydrofolate + dTMP. It functions in the pathway pyrimidine metabolism; dTTP biosynthesis. In terms of biological role, catalyzes the reductive methylation of 2'-deoxyuridine-5'-monophosphate (dUMP) to 2'-deoxythymidine-5'-monophosphate (dTMP) while utilizing 5,10-methylenetetrahydrofolate (mTHF) as the methyl donor and reductant in the reaction, yielding dihydrofolate (DHF) as a by-product. This enzymatic reaction provides an intracellular de novo source of dTMP, an essential precursor for DNA biosynthesis. The chain is Thymidylate synthase from Brucella abortus (strain 2308).